The chain runs to 75 residues: Small ribosomal subunit protein bS18 (75 aa).

It belongs to the bacterial ribosomal protein bS18 family. Part of the 30S ribosomal subunit. Forms a tight heterodimer with protein bS6.

In terms of biological role, binds as a heterodimer with protein bS6 to the central domain of the 16S rRNA, where it helps stabilize the platform of the 30S subunit. In Yersinia enterocolitica serotype O:8 / biotype 1B (strain NCTC 13174 / 8081), this protein is Small ribosomal subunit protein bS18.